The following is a 381-amino-acid chain: MAVPTLSETLTTLLHRVLQGEDLTPEEGVFLLQQWDPEALTVIRQTSDRLRQQQVGDTVTYVVNRNINFTNICEQHCSFCAFRRDEDQPGAYWLGFDEILAKTGEAVERGATEICMQGGLHPGAKLQGHSLAYYLKLVETIKTTFPTLHLHAFSPQEVQFIAREDGLSYAQVITALRDAGVNSMPGTAAEVLVDEVRRVICPEKINTATWLEIISTAHALGVPTTSTMLSGQIETPQQQIEHLFLLRSLQQKAIQQDYPARFTEFILLPYVGQSAPKPLRKRVGRDQPVLQDALLLTAVARIFLGNWIVNHQPSWVKLGLAGATEALIWGCNDLGGTLMEEHITSMAGAQGGTCRSVENLQQAIASLNRPYRERTTLYGYL.

In terms of domain architecture, Radical SAM core spans 59-306 (VTYVVNRNIN…TAVARIFLGN (248 aa)). [4Fe-4S] cluster is bound by residues cysteine 73, cysteine 77, and cysteine 80.

It belongs to the radical SAM superfamily. CofH family. Consists of two subunits, CofG and CofH. The cofactor is [4Fe-4S] cluster.

The enzyme catalyses 5-amino-6-(D-ribitylamino)uracil + L-tyrosine + S-adenosyl-L-methionine = 5-amino-5-(4-hydroxybenzyl)-6-(D-ribitylimino)-5,6-dihydrouracil + 2-iminoacetate + 5'-deoxyadenosine + L-methionine + H(+). It functions in the pathway cofactor biosynthesis; coenzyme F0 biosynthesis. Functionally, catalyzes the radical-mediated synthesis of 5-amino-5-(4-hydroxybenzyl)-6-(D-ribitylimino)-5,6-dihydrouracil from 5-amino-6-(D-ribitylamino)uracil and L-tyrosine. The polypeptide is 5-amino-6-(D-ribitylamino)uracil--L-tyrosine 4-hydroxyphenyl transferase (Cyanothece sp. (strain PCC 7425 / ATCC 29141)).